We begin with the raw amino-acid sequence, 226 residues long: Lipoprotein-releasing system ATP-binding protein LolD (226 aa).

Residues 5–225 (LELVEIERHF…TLKEKKIVEL (221 aa)) form the ABC transporter domain. 41–48 (APSGAGKS) is a binding site for ATP.

The protein belongs to the ABC transporter superfamily. Lipoprotein translocase (TC 3.A.1.125) family. As to quaternary structure, the complex is composed of two ATP-binding proteins (LolD) and two transmembrane proteins (LolC and LolE).

It localises to the cell inner membrane. Its function is as follows. Part of the ABC transporter complex LolCDE involved in the translocation of mature outer membrane-directed lipoproteins, from the inner membrane to the periplasmic chaperone, LolA. Responsible for the formation of the LolA-lipoprotein complex in an ATP-dependent manner. This chain is Lipoprotein-releasing system ATP-binding protein LolD, found in Bartonella quintana (strain Toulouse) (Rochalimaea quintana).